Here is a 534-residue protein sequence, read N- to C-terminus: Prolyl 4-hydroxylase subunit alpha-1 (534 aa).

The first 17 residues, 1–17 (MIWYILVVGILLPQSLA), serve as a signal peptide directing secretion. N-linked (GlcNAc...) asparagine glycosylation is present at Asn113. Residues 205–238 (VSVLDYLSYAVYQQGDLDKALLLTKKLLELDPEH) form a TPR repeat. The disordered stretch occupies residues 258–277 (ANKSSSDDQSDQKTTLKKKG). An N-linked (GlcNAc...) asparagine glycan is attached at Asn259. Residues 411–519 (TAEELQVANY…KWVSNKWLHE (109 aa)) form the Fe2OG dioxygenase domain. Residues His429, Asp431, and His500 each coordinate Fe cation. Lys510 lines the 2-oxoglutarate pocket.

Belongs to the P4HA family. Heterotetramer of two alpha-1 chains and two beta chains (P4HB)(the beta chain is the multi-functional PDI), where P4HB plays the role of a structural subunit; this tetramer catalyzes the formation of 4-hydroxyproline in collagen. Fe(2+) is required as a cofactor. It depends on L-ascorbate as a cofactor.

The protein resides in the endoplasmic reticulum lumen. It carries out the reaction L-prolyl-[collagen] + 2-oxoglutarate + O2 = trans-4-hydroxy-L-prolyl-[collagen] + succinate + CO2. Its function is as follows. Catalyzes the post-translational formation of 4-hydroxyproline in -Xaa-Pro-Gly- sequences in collagens and other proteins. This chain is Prolyl 4-hydroxylase subunit alpha-1 (P4HA1), found in Bos taurus (Bovine).